Reading from the N-terminus, the 444-residue chain is 3-isopropylmalate dehydratase large subunit (444 aa).

[4Fe-4S] cluster-binding residues include cysteine 348, cysteine 408, and cysteine 411.

It belongs to the aconitase/IPM isomerase family. LeuC type 1 subfamily. Heterodimer of LeuC and LeuD. [4Fe-4S] cluster serves as cofactor.

It carries out the reaction (2R,3S)-3-isopropylmalate = (2S)-2-isopropylmalate. It participates in amino-acid biosynthesis; L-leucine biosynthesis; L-leucine from 3-methyl-2-oxobutanoate: step 2/4. In terms of biological role, catalyzes the isomerization between 2-isopropylmalate and 3-isopropylmalate, via the formation of 2-isopropylmaleate. The polypeptide is 3-isopropylmalate dehydratase large subunit (Buchnera aphidicola subsp. Uroleucon ambrosiae).